A 1157-amino-acid polypeptide reads, in one-letter code: Cyclin-dependent kinase 12 (1157 aa).

A disordered region spans residues 15 to 540 (SDVSSEDFSD…RSPTSRDLKH (526 aa)). Over residues 18-32 (SSEDFSDQEAGDLDA) the composition is skewed to acidic residues. Basic and acidic residues predominate over residues 55 to 76 (GRLDAKPDKEGYDNYRSRRAED). Polar residues predominate over residues 85 to 94 (SRQTSSSEAT). A Phosphothreonine modification is found at Thr106. The segment covering 134-162 (RQKRKKQKKEKHKHKSKKKSKKRKKKRAK) has biased composition (basic residues). Residues 163–176 (SYSSIDSMSDNDIN) are compositionally biased toward low complexity. Thr184 carries the phosphothreonine modification. Residues 189–215 (PSKSNERTVSAAPSSFTPHNLKESSSP) are compositionally biased toward polar residues. Phosphoserine occurs at positions 190 and 192. Thr217 carries the post-translational modification Phosphothreonine. The span at 224–255 (PNTNSNYYGESSLETANSALGSNLQVTVTNKQ) shows a compositional bias: polar residues. The segment covering 256–281 (SISNRLRSPPPSSRSSGNGPRFGNSP) has biased composition (low complexity). A Phosphoserine modification is found at Ser280. Thr283 carries the phosphothreonine modification. Phosphoserine is present on residues Ser291, Ser301, and Ser314. Residues 315-332 (PHKEDVSAHHRSSHDHGY) are compositionally biased toward basic and acidic residues. Ser353 carries the phosphoserine modification. A Phosphothreonine modification is found at Thr365. The segment covering 392–403 (GKYERYSRDRYS) has biased composition (basic and acidic residues). Residues 408-422 (RSPSVQHSRSRQSPS) show a composition bias toward low complexity. Residues 444 to 468 (TTVSSTPSHTTRTSKRASGTGTSGD) are compositionally biased toward polar residues. Low complexity predominate over residues 473 to 484 (SPRTSSRYMESS). Phosphoserine is present on residues Ser487 and Ser492. Residues 495–508 (HHYHHRRSPRMRQR) are compositionally biased toward basic residues. The segment covering 518–533 (PSSASSESSASRSRSP) has biased composition (low complexity). The residue at position 553 (Ser553) is a Phosphoserine. Disordered regions lie at residues 574–661 (ERQE…ADVP) and 675–782 (PFSA…QRPV). Positions 586–603 (GALTINDNSSSVDGNTPN) are enriched in polar residues. A compositionally biased stretch (low complexity) spans 609 to 623 (SAPGSGTPAAASTTS). Polar residues-rich tracts occupy residues 644-656 (NKQN…NPAS) and 721-731 (VTSSGSANKSV). 4 positions are modified to phosphoserine: Ser730, Ser743, Ser747, and Ser755. The span at 746 to 760 (LSGDDDVIDSPEDFD) shows a compositional bias: acidic residues. Positions 804 to 1098 (FEMIAQIGEG…AEDALRSPWL (295 aa)) constitute a Protein kinase domain. Residues 810–818 (IGEGTYGQV), Lys833, and 891–896 (EYMDHD) each bind ATP. The Proton acceptor role is filled by Asp936. His1118 lines the ATP pocket.

This sequence belongs to the protein kinase superfamily. CMGC Ser/Thr protein kinase family. CDC2/CDKX subfamily. As to quaternary structure, interacts with cyclin CycK.

The protein localises to the nucleus. The protein resides in the chromosome. It catalyses the reaction [DNA-directed RNA polymerase] + ATP = phospho-[DNA-directed RNA polymerase] + ADP + H(+). The enzyme catalyses L-seryl-[protein] + ATP = O-phospho-L-seryl-[protein] + ADP + H(+). The catalysed reaction is L-threonyl-[protein] + ATP = O-phospho-L-threonyl-[protein] + ADP + H(+). In terms of biological role, cyclin-dependent kinase which displays CTD kinase activity: hyperphosphorylates the C-terminal heptapeptide repeat domain (CTD) of the largest RNA polymerase II subunit, thereby acting as a key regulator of transcription elongation. The protein is Cyclin-dependent kinase 12 (Cdk12) of Drosophila melanogaster (Fruit fly).